The following is a 376-amino-acid chain: Queuine tRNA-ribosyltransferase (376 aa).

The Proton acceptor role is filled by D90. Substrate contacts are provided by residues 90–94, D144, Q193, and G220; that span reads DSGGF. Residues 251–257 form an RNA binding region; that stretch reads GVGTPED. The active-site Nucleophile is D270. Residues 275–279 form an RNA binding; important for wobble base 34 recognition region; sequence TRNAR. Positions 308, 310, 313, and 339 each coordinate Zn(2+).

Belongs to the queuine tRNA-ribosyltransferase family. Homodimer. Within each dimer, one monomer is responsible for RNA recognition and catalysis, while the other monomer binds to the replacement base PreQ1. Zn(2+) is required as a cofactor.

The enzyme catalyses 7-aminomethyl-7-carbaguanine + guanosine(34) in tRNA = 7-aminomethyl-7-carbaguanosine(34) in tRNA + guanine. The protein operates within tRNA modification; tRNA-queuosine biosynthesis. In terms of biological role, catalyzes the base-exchange of a guanine (G) residue with the queuine precursor 7-aminomethyl-7-deazaguanine (PreQ1) at position 34 (anticodon wobble position) in tRNAs with GU(N) anticodons (tRNA-Asp, -Asn, -His and -Tyr). Catalysis occurs through a double-displacement mechanism. The nucleophile active site attacks the C1' of nucleotide 34 to detach the guanine base from the RNA, forming a covalent enzyme-RNA intermediate. The proton acceptor active site deprotonates the incoming PreQ1, allowing a nucleophilic attack on the C1' of the ribose to form the product. After dissociation, two additional enzymatic reactions on the tRNA convert PreQ1 to queuine (Q), resulting in the hypermodified nucleoside queuosine (7-(((4,5-cis-dihydroxy-2-cyclopenten-1-yl)amino)methyl)-7-deazaguanosine). The polypeptide is Queuine tRNA-ribosyltransferase (Campylobacter concisus (strain 13826)).